Here is a 439-residue protein sequence, read N- to C-terminus: U1 small nuclear ribonucleoprotein 70 kDa (439 aa).

Position 2 is an N-acetylthreonine (Thr2). The disordered stretch occupies residues 48–79; the sequence is FEDPRDAPPPTRAETREERMERKRREKIERRQ. Residues 60 to 79 are compositionally biased toward basic and acidic residues; that stretch reads AETREERMERKRREKIERRQ. The tract at residues 92–202 is required for interaction with U1 RNA; sequence HNDPNAQGDA…GGGLGGTRRG (111 aa). Residues 103–181 form the RRM domain; it reads KTLFVARVNY…RRVLVDVERG (79 aa). Lys118 carries the N6-acetyllysine modification. Tyr126 carries the post-translational modification Phosphotyrosine. The interval 187-439 is disordered; the sequence is WRPRRLGGGL…NGYLMEAAPE (253 aa). Positions 192 to 201 are enriched in gly residues; sequence LGGGLGGTRR. Residues 207-254 are compositionally biased toward basic and acidic residues; it reads NIRHSGRDDTSRYDERPGPSPLPHRDRDRDRERERRERSRERDKERER. Phosphoserine occurs at positions 226 and 268. Residues 255-268 show a composition bias toward basic residues; it reads RRSRSRDRRRRSRS. Basic and acidic residues-rich tracts occupy residues 269–286 and 294–310; these read RDKE…DKDR and RSRE…EELR. Ser323 bears the Phosphoserine mark. Basic and acidic residues predominate over residues 346–394; it reads PEEKGRDRDRDRRRSHRSERERRRDRDRDRDREHKRGERGGDRGRDEAR. Lys349 is covalently cross-linked (Glycyl lysine isopeptide (Lys-Gly) (interchain with G-Cter in SUMO2)). The span at 395–410 shows a compositional bias: gly residues; sequence GGGGGGQDNGLEGLGN.

Component of the U1 snRNP. The U1 snRNP is composed of the U1 snRNA and the 7 core Sm proteins SNRPB, SNRPD1, SNRPD2, SNRPD3, SNRPE, SNRPF and SNRPG that assemble in a heptameric protein ring on the Sm site of the small nuclear RNA to form the core snRNP, and at least three U1 snRNP-specific proteins SNRNP70/U1-70K, SNRPA/U1-A and SNRPC/U1-C. Interacts with SCNM1. Found in a pre-mRNA splicing complex with SFRS4, SFRS5, SNRNP70, SNRPA1, SRRM1 and SRRM2. Found in a pre-mRNA exonic splicing enhancer (ESE) complex with SNRNP70, SNRPA1, SRRM1 and TRA2B/SFRS10. Interacts with dephosphorylated SFRS13A and SFPQ. Interacts with NUDT21/CPSF5, CPSF6, SCAF11, and ZRANB2. Interacts with GEMIN5. Interacts with FUS. Post-translationally, extensively phosphorylated on serine residues in the C-terminal region.

Its subcellular location is the nucleus speckle. The protein localises to the nucleus. It is found in the nucleoplasm. In terms of biological role, component of the spliceosomal U1 snRNP, which is essential for recognition of the pre-mRNA 5' splice-site and the subsequent assembly of the spliceosome. SNRNP70 binds to the loop I region of U1-snRNA. This chain is U1 small nuclear ribonucleoprotein 70 kDa (SNRNP70), found in Bos taurus (Bovine).